The sequence spans 456 residues: UDP-N-acetylmuramate--L-alanine ligase (456 aa).

114 to 120 (GTHGKTT) provides a ligand contact to ATP.

The protein belongs to the MurCDEF family.

It localises to the cytoplasm. The enzyme catalyses UDP-N-acetyl-alpha-D-muramate + L-alanine + ATP = UDP-N-acetyl-alpha-D-muramoyl-L-alanine + ADP + phosphate + H(+). It functions in the pathway cell wall biogenesis; peptidoglycan biosynthesis. In terms of biological role, cell wall formation. The protein is UDP-N-acetylmuramate--L-alanine ligase of Porphyromonas gingivalis (strain ATCC 33277 / DSM 20709 / CIP 103683 / JCM 12257 / NCTC 11834 / 2561).